A 180-amino-acid polypeptide reads, in one-letter code: Ribulose bisphosphate carboxylase small subunit, chloroplastic 3 (180 aa).

The N-terminal 56 residues, 1 to 56, are a transit peptide targeting the chloroplast; the sequence is MASMISSSAVTTVSRASTVQSAAVAPFGGLKSMTGFPVKKVNTDITSITSNGGRVK.

The protein belongs to the RuBisCO small chain family. Heterohexadecamer of 8 large and 8 small subunits.

The protein resides in the plastid. The protein localises to the chloroplast. Its function is as follows. RuBisCO catalyzes two reactions: the carboxylation of D-ribulose 1,5-bisphosphate, the primary event in carbon dioxide fixation, as well as the oxidative fragmentation of the pentose substrate. Both reactions occur simultaneously and in competition at the same active site. Although the small subunit is not catalytic it is essential for maximal activity. Binds to abscisic acid (ABA); only half of the possible binding sites are occupied in the crystal; and there are indications this is a low affinity site. The sequence is that of Ribulose bisphosphate carboxylase small subunit, chloroplastic 3 (RBCS.3A) from Pisum sativum (Garden pea).